The sequence spans 253 residues: Complement C1q subcomponent subunit B (253 aa).

The signal sequence occupies residues 1 to 25; it reads MKTQWSEILTPLLLLLLGLLHVSWA. Gln-26 is modified (pyrrolidone carboxylic acid). The region spanning 29 to 112 is the Collagen-like domain; the sequence is CTGSPGIPGV…GPRGPKGGSG (84 aa). The disordered stretch occupies residues 29 to 114; sequence CTGSPGIPGV…RGPKGGSGDY (86 aa). 4-hydroxyproline occurs at positions 33, 36, 39, 51, and 54. 2 positions are modified to 5-hydroxylysine: Lys-57 and Lys-60. Pro-63 is subject to 4-hydroxyproline. Residues 68-77 show a composition bias toward basic and acidic residues; it reads DHGELGEKGD. Lys-75 carries the post-translational modification 5-hydroxylysine. Residues 78 to 96 are compositionally biased toward low complexity; it reads AGIPGIPGKVGPKGPVGPK. Pro-81 and Pro-84 each carry 4-hydroxyproline. A 5-hydroxylysine mark is found at Lys-90 and Lys-96. 2 positions are modified to 4-hydroxyproline: Pro-99 and Pro-102. Position 108 is a 5-hydroxylysine (Lys-108). The 139-residue stretch at 115–253 folds into the C1q domain; that stretch reads KATQKVAFSA…GFLLFPDMDV (139 aa). A disulfide bond links Cys-179 and Cys-198. Ca(2+) contacts are provided by Asp-199, Tyr-200, and Gln-206.

As to quaternary structure, core component of the complement C1 complex, a calcium-dependent complex composed of 1 molecule of the C1Q subcomplex, 2 molecules of C1R and 2 molecules of C1S. The C1Q subcomplex is composed 18 subunits: 3 chains of C1QA, C1QB, and C1QC trimerize to form 6 collagen-like triple helices connected to six globular ligand-recognition modules (C1q domain). In terms of processing, hydroxylated on lysine and proline residues. Hydroxylated lysine residues can be glycosylated. Human C1Q contains up to 68.3 hydroxylysine-galactosylglucose residues and up to 2.5 hydroxylysine-galactose per molecule. Total percentage hydroxylysine residues glycosylated is 86.4%. As to expression, highest levels in spleen, lung and brain. Weaker expression in kidney and liver. In the spleen, localized mainly to the red pulp, in cells mainly of monocyte-macrophage lineage. In white pulp, localized in specific dendritic cells such as those from the periarteriolar lymphatic sheath (PALS).

It localises to the secreted. Its subcellular location is the cell surface. The C1Q subcomplex is inhibited by sulfated molecules, such as triterpenoid sulfates, heparan sulfate, or chondroitin sulfates. Its function is as follows. Core component of the complement C1 complex, a multiprotein complex that initiates the classical pathway of the complement system, a cascade of proteins that leads to phagocytosis and breakdown of pathogens and signaling that strengthens the adaptive immune system. The classical complement pathway is initiated by the C1Q subcomplex of the C1 complex, which specifically binds IgG or IgM immunoglobulins complexed with antigens, forming antigen-antibody complexes on the surface of pathogens: C1QA, together with C1QB and C1QC, specifically recognizes and binds the Fc regions of IgG or IgM via its C1q domain. Immunoglobulin-binding activates the proenzyme C1R, which cleaves C1S, initiating the proteolytic cascade of the complement system. The C1Q subcomplex is activated by a hexamer of IgG complexed with antigens, while it is activated by a pentameric IgM. The C1Q subcomplex also recognizes and binds phosphatidylserine exposed on the surface of cells undergoing programmed cell death, possibly promoting activation of the complement system. The protein is Complement C1q subcomponent subunit B of Rattus norvegicus (Rat).